Consider the following 446-residue polypeptide: Keratin, type I cytoskeletal 25 (446 aa).

A head region spans residues 1–74; sequence MSLRLSSGSR…VNEGGLLSGN (74 aa). A coil 1A region spans residues 75–110; the sequence is EKVTMQNLNDRLASYLDNVQALQEANADLEQKIKGW. The IF rod domain maps to 75–390; sequence EKVTMQNLND…LLIGGDEGAC (316 aa). The interval 111–132 is linker 1; it reads YEKFGPGSCRGLDHDYSRYFPI. Residues 133-224 form a coil 1B region; it reads IDDLKNQIIT…KNHKEEMQAL (92 aa). A linker 12 region spans residues 225-247; that stretch reads QCAAGGNVNVEMNAAPGVDLTVL. The interval 248–386 is coil 2; it reads LNNMRAEYEA…ETYCLLIGGD (139 aa). The tract at residues 387-446 is tail; the sequence is EGACKSSSYKSKDYGSGNAGNQIKDPVKAIVVKKVLEEVDQRSKILTTRLHSLEEKSQSN. A Phosphoserine modification is found at Ser438.

The protein belongs to the intermediate filament family. Heterodimer of a type I and a type II keratin. Heterodimer with type II keratin KRT5 leading to the formation of keratin intermediate filament (KIF) network. Interacts with KRT6A to form filaments.

It is found in the cytoplasm. In terms of biological role, essential for the proper assembly of type I and type II keratin protein complexes and formation of keratin intermediate filaments in the inner root sheath (irs). Plays a role in the cytoskeleton organization. This Mus musculus (Mouse) protein is Keratin, type I cytoskeletal 25.